Here is a 560-residue protein sequence, read N- to C-terminus: MVWALTPVDTVRGAQRCYIFAAGTYKVGRKDCDVIVQTDTSISRVHAEIVVEKMVAWDPQSGAPANPSYVRVVDRSKYGTFFNKVQGTQGSRLHKDEDAMLADGDTVTFGTGNATFRLSFVPIVVFFHGKKSGRISPCLQAVMTSIGAYATRKWSDECTHVLVDESCSLTPELLDAVLAKKQIVLGDWFKVMAEKNIHTEMPSSTQYIPKLTLDGMEIQVVEIKLIESCLAGYTFILGSSEKYKFGDKLHALLESTGAKYLHVDEFCANSQDSGAGENDKDILLVPAKSPLEFSKIRGLFPLSKITDVKLFAAILSGHLEATAIEPPAYIVASSNSTDETIVVDSDVEIDTATSDHTVAASKSEHHIEHISDDKKEVVAISEEDAVNLVEAKTSINLHSDQEKDEIVKPMEEDVKVIEKTATMRGFKVEGEDIPVMTKVPKDETLDSRDETCHVIYTQNLVVKSILQSARAESIETGGINFKRFRKRGAVSGNSFKDLIPYSREPYRESDYERGTVTDFMREEKKRRQMEAIAEDLFNNAKPKKKAAAGSSIHTMLTGRR.

The FHA domain maps to 25 to 87 (YKVGRKDCDV…YGTFFNKVQG (63 aa)). In terms of domain architecture, BRCT spans 115-190 (TFRLSFVPIV…KQIVLGDWFK (76 aa)).

Belongs to the Nibrin family. In terms of assembly, component of the MRN complex composed of two heterodimers RAD50 and MRE11 associated with a single NBS1. Mostly expressed in the shoot apex and young flower, but also in young leaves, root tips and stamen, tissues where frequent cell division or meiosis may occur.

Its subcellular location is the nucleus. The protein localises to the chromosome. Functionally, component of the MRN complex, which plays a central role in double-strand break (DSB) repair, DNA recombination, maintenance of telomere integrity and meiosis. The MRN complex is involved in the repair of DNA double-strand breaks (DSBs) via homologous recombination (HR), an error-free mechanism which primarily occurs during S and G2 phases. The complex (1) mediates the end resection of damaged DNA, which generates proper single-stranded DNA, a key initial steps in HR, and is (2) required for the recruitment of other repair factors and efficient activation of ATM and ATR upon DNA damage. The MRN complex possesses single-strand endonuclease activity and double-strand-specific 3'-5' exonuclease activity, which are provided by MRE11, to initiate end resection, which is required for single-strand invasion and recombination. Within the MRN complex, NBS1 acts as a protein-protein adapter, which specifically recognizes and binds phosphorylated proteins, promoting their recruitment to DNA damage sites. Recruits MRE11 and RAD50 components of the MRN complex to DSBs in response to DNA damage. The protein is Nibrin homolog of Oryza sativa subsp. japonica (Rice).